A 260-amino-acid chain; its full sequence is Flap endonuclease Xni (260 aa).

Residue Asp104 participates in Mg(2+) binding. In terms of domain architecture, 5'-3' exonuclease spans 160-249; that stretch reads VSPQQLTDYW…LNGNLQQLRL (90 aa). The K(+) site is built by Leu171, Ala172, Pro180, Val182, and Ile185. The segment at 184–189 is interaction with DNA; that stretch reads GIGPKS.

Belongs to the Xni family. The cofactor is Mg(2+). Requires K(+) as cofactor.

Functionally, has flap endonuclease activity. During DNA replication, flap endonucleases cleave the 5'-overhanging flap structure that is generated by displacement synthesis when DNA polymerase encounters the 5'-end of a downstream Okazaki fragment. The sequence is that of Flap endonuclease Xni from Pectobacterium carotovorum subsp. carotovorum (strain PC1).